A 197-amino-acid chain; its full sequence is Casparian strip membrane protein 4 (197 aa).

The Cytoplasmic segment spans residues 1-34 (MMSSTTIDVPAESSNVAKGKAVLVAAPRPGGWKK). Residues 35 to 55 (GIAIVDFVLRLGAVAAALGAA) form a helical membrane-spanning segment. Topologically, residues 56–85 (TTMATADQTLPFFTQFFQFEASYDSFTTFQ) are extracellular. Residues 86-106 (FFVITMALVGCYLVLSLPLSI) traverse the membrane as a helical segment. The Cytoplasmic segment spans residues 107–118 (VSIIRPHALGPK). The helical transmembrane segment at 119–139 (LFLIILDTVFLTLATASAASA) threads the bilayer. Over 140–171 (AAVVYVAHNGNQDSNWLAICNQFGDFCAQTSG) the chain is Extracellular. Residues 172–192 (AVVSSLVAVVVFVLLIVMSAL) traverse the membrane as a helical segment. The Cytoplasmic segment spans residues 193–197 (ALGKH).

It belongs to the Casparian strip membrane proteins (CASP) family. As to quaternary structure, homodimer and heterodimers.

The protein localises to the cell membrane. Regulates membrane-cell wall junctions and localized cell wall deposition. Required for establishment of the Casparian strip membrane domain (CSD) and the subsequent formation of Casparian strips, a cell wall modification of the root endodermis that determines an apoplastic barrier between the intraorganismal apoplasm and the extraorganismal apoplasm and prevents lateral diffusion. The sequence is that of Casparian strip membrane protein 4 from Lotus japonicus (Lotus corniculatus var. japonicus).